The primary structure comprises 471 residues: 3-hydroxylaminophenol mutase (471 aa).

In terms of domain architecture, GS beta-grasp spans 15 to 100; the sequence is NDVKFVDFRF…TCDVVEPSDG (86 aa). One can recognise a GS catalytic domain in the interval 107 to 471; sequence PRSIAKRAEA…PVEFEMYYSL (365 aa).

The protein belongs to the glutamine synthetase family.

It catalyses the reaction 3-hydroxyaminophenol = aminohydroquinone. Is inhibited by H(2)O(2). 1,10-phenanthroline inhibits the activity slightly, but other metal cation chelators such as EDTA or tiron have no effect on the activity. Divalent metal cations and hydroxylamine have also no effect on the activity. Due to the relationship of the protein with glutamine synthetases, glutamate and glutamine were tested as inhibitors; neither preincubation of the compounds with the enzyme nor their addition to the assay buffer affected 3HAP mutase activity. In terms of biological role, catalyzes the isomerization of 3-hydroxylaminophenol (3HAP) to aminohydroquinone, a step in the degradative pathway of 3-nitrophenol. The enzymatic reaction is regiospecific since it leads to the formation of aminohydroquinone exclusively, without producing the isomeric 4-aminocatechol. Can also isomerize other hydroxylaminoaromatic compounds, such as hydroxylaminobenzene to a mixture of 2-aminophenol and 4-aminophenol, 4-hydroxylaminotoluene to 6-amino-m-cresol, and 2-chloro-5-hydroxylaminophenol to 2-amino-5-chlorohydroquinone. Does not act on 4-hydroxylaminobenzoate. The sequence is that of 3-hydroxylaminophenol mutase from Cupriavidus pinatubonensis (strain JMP 134 / LMG 1197) (Cupriavidus necator (strain JMP 134)).